The sequence spans 1179 residues: Integrin alpha-1 (1179 aa).

An N-terminal signal peptide occupies residues 1–28 (MVPRRPASLEVTVACIWLLTVILGVCIS). The Extracellular segment spans residues 29 to 1141 (FNVDVKNSMS…SKDGLPGRVP (1113 aa)). The FG-GAP 1 repeat unit spans residues 30–91 (NVDVKNSMSF…CPVGRERSMP (62 aa)). Cysteine 82 and cysteine 92 are joined by a disulfide. N-linked (GlcNAc...) asparagine glycans are attached at residues asparagine 100, asparagine 105, asparagine 112, asparagine 217, asparagine 317, asparagine 341, asparagine 402, asparagine 418, and asparagine 459. Residues 101–160 (TSIPNVTEIKENMTFGSTLVTNPKGGFLACGPLYAYRCGHLHYTTGICSDVSPTFQVVNS) form an FG-GAP 2 repeat. Residues 175–364 (IVLDGSNSIY…LGERIFALEA (190 aa)) form the VWFA domain. One copy of the FG-GAP 3 repeat lies at 365–417 (TADQSAASFEMEMSQTGFSAHYSQDWVMLGAVGAYDWNGTVVMQKANQIVIPH). FG-GAP repeat units lie at residues 422–474 (QTEP…DGDV), 475–537 (NILQ…RFEY), 556–614 (SCTK…TIRK), and 618–678 (QRIP…FEPN). The Ca(2+) site is built by aspartate 497, aspartate 499, aspartate 501, and aspartate 505. A glycan (N-linked (GlcNAc...) asparagine) is linked at asparagine 531. Ca(2+)-binding residues include aspartate 579, asparagine 581, aspartate 583, aspartate 587, aspartate 641, asparagine 643, aspartate 645, and aspartate 649. A disulfide bond links cysteine 687 and cysteine 696. N-linked (GlcNAc...) asparagine glycosylation is found at asparagine 698, asparagine 747, and asparagine 779. Cysteine 702 and cysteine 755 are joined by a disulfide. Cysteine 807 and cysteine 813 form a disulfide bridge. 7 N-linked (GlcNAc...) asparagine glycosylation sites follow: asparagine 839, asparagine 882, asparagine 907, asparagine 938, asparagine 965, asparagine 973, and asparagine 1007. The cysteines at positions 877 and 885 are disulfide-linked. Disulfide bonds link cysteine 1029-cysteine 1062 and cysteine 1065-cysteine 1072. 3 N-linked (GlcNAc...) asparagine glycosylation sites follow: asparagine 1083, asparagine 1102, and asparagine 1113. The chain crosses the membrane as a helical span at residues 1142–1164 (LWVILLSAFAGLLLLMLLILALW). Residues 1165–1179 (KIGFFKRPLKKKMEK) are Cytoplasmic-facing. The GFFKR motif signature appears at 1167 to 1171 (GFFKR).

This sequence belongs to the integrin alpha chain family. As to quaternary structure, heterodimer of an alpha and a beta subunit. Alpha-1 associates with beta-1. Interacts with RAB21. Interacts (via cytoplasmic domain) with PTPN2; activates PTPN2 phosphatase activity towards EGFR and negatively regulates EGF signaling.

The protein resides in the membrane. Its function is as follows. Integrin alpha-1/beta-1 is a receptor for laminin and collagen. It recognizes the proline-hydroxylated sequence G-F-P-G-E-R in collagen. Involved in anchorage-dependent, negative regulation of EGF-stimulated cell growth. The polypeptide is Integrin alpha-1 (Itga1) (Mus musculus (Mouse)).